The chain runs to 604 residues: Elongation factor 4 (604 aa).

In terms of domain architecture, tr-type G spans 10–191 (KNIRNFSIIA…KIITTIPAPS (182 aa)). GTP contacts are provided by residues 22–27 (DHGKST) and 138–141 (NKID).

Belongs to the TRAFAC class translation factor GTPase superfamily. Classic translation factor GTPase family. LepA subfamily.

It localises to the cell inner membrane. The catalysed reaction is GTP + H2O = GDP + phosphate + H(+). Functionally, required for accurate and efficient protein synthesis under certain stress conditions. May act as a fidelity factor of the translation reaction, by catalyzing a one-codon backward translocation of tRNAs on improperly translocated ribosomes. Back-translocation proceeds from a post-translocation (POST) complex to a pre-translocation (PRE) complex, thus giving elongation factor G a second chance to translocate the tRNAs correctly. Binds to ribosomes in a GTP-dependent manner. The chain is Elongation factor 4 from Helicobacter acinonychis (strain Sheeba).